Reading from the N-terminus, the 273-residue chain is Large ribosomal subunit protein uL2cz/uL2cy (273 aa).

The disordered stretch occupies residues 224 to 273 (NPVDHPHGGGEGRAPIGRKKPATPWGYPALGRRSRKRNKYSDRFILRRRK). Positions 262–273 (KYSDRFILRRRK) are enriched in basic and acidic residues.

The protein belongs to the universal ribosomal protein uL2 family. In terms of assembly, part of the 50S ribosomal subunit.

It is found in the plastid. It localises to the chloroplast. In Piper cenocladum (Ant piper), this protein is Large ribosomal subunit protein uL2cz/uL2cy (rpl2-A).